The primary structure comprises 165 residues: Xanthine-guanine phosphoribosyltransferase (165 aa).

5-phospho-alpha-D-ribose 1-diphosphate is bound by residues Arg-41–Gly-42 and Asp-98–Thr-106. Residue Asp-99 coordinates Mg(2+). Guanine-binding residues include Asp-102 and Ile-145. Xanthine-binding residues include Asp-102 and Ile-145. Residues Asp-102 to Thr-106 and Trp-144 to Ile-145 contribute to the GMP site.

The protein belongs to the purine/pyrimidine phosphoribosyltransferase family. XGPT subfamily. Homotetramer. Mg(2+) serves as cofactor.

Its subcellular location is the cell inner membrane. The enzyme catalyses GMP + diphosphate = guanine + 5-phospho-alpha-D-ribose 1-diphosphate. The catalysed reaction is XMP + diphosphate = xanthine + 5-phospho-alpha-D-ribose 1-diphosphate. It carries out the reaction IMP + diphosphate = hypoxanthine + 5-phospho-alpha-D-ribose 1-diphosphate. The protein operates within purine metabolism; GMP biosynthesis via salvage pathway; GMP from guanine: step 1/1. It functions in the pathway purine metabolism; XMP biosynthesis via salvage pathway; XMP from xanthine: step 1/1. Its function is as follows. Purine salvage pathway enzyme that catalyzes the transfer of the ribosyl-5-phosphate group from 5-phospho-alpha-D-ribose 1-diphosphate (PRPP) to the N9 position of the 6-oxopurines guanine and xanthine to form the corresponding ribonucleotides GMP (guanosine 5'-monophosphate) and XMP (xanthosine 5'-monophosphate), with the release of PPi. To a lesser extent, also acts on hypoxanthine. This chain is Xanthine-guanine phosphoribosyltransferase, found in Brucella canis (strain ATCC 23365 / NCTC 10854 / RM-666).